The sequence spans 356 residues: Protein MGF 360-19R (356 aa).

One copy of the ANK repeat lies at 61–93; that stretch reads LLNTALMKAVQENNYELIMLFTEWGANINYGLL.

It belongs to the asfivirus MGF 360 family.

Plays a role in virus cell tropism, and may be required for efficient virus replication in macrophages. The polypeptide is Protein MGF 360-19R (African swine fever virus (isolate Pig/Kenya/KEN-50/1950) (ASFV)).